Consider the following 89-residue polypeptide: MAKKSKIAKAKRQEKLVQQYAVKRAALKAKGDYIGLSKLPRDSSPVRLHHRDVLDGRPHAYMRKFGMSRLNFRELAHKGQIPGVRKASW.

The protein belongs to the universal ribosomal protein uS14 family. Part of the 30S ribosomal subunit. Contacts proteins S3 and S10.

Its function is as follows. Binds 16S rRNA, required for the assembly of 30S particles and may also be responsible for determining the conformation of the 16S rRNA at the A site. This chain is Small ribosomal subunit protein uS14A, found in Lacticaseibacillus paracasei (strain ATCC 334 / BCRC 17002 / CCUG 31169 / CIP 107868 / KCTC 3260 / NRRL B-441) (Lactobacillus paracasei).